A 499-amino-acid chain; its full sequence is Maturase K (499 aa).

The protein belongs to the intron maturase 2 family. MatK subfamily.

It is found in the plastid. Its subcellular location is the chloroplast. Its function is as follows. Usually encoded in the trnK tRNA gene intron. Probably assists in splicing its own and other chloroplast group II introns. The protein is Maturase K of Gymnocladus dioicus (Kentucky coffee tree).